The following is a 920-amino-acid chain: Whirlin (920 aa).

One can recognise a PDZ 1 domain in the interval 141–224; sequence LVSLRRAKAH…LVLSVYSAGR (84 aa). The disordered stretch occupies residues 241 to 262; sequence QGRSTSPPSSLPHGSTLRQHED. Positions 242–257 are enriched in polar residues; sequence GRSTSPPSSLPHGSTL. One can recognise a PDZ 2 domain in the interval 278 to 360; it reads KVNLVLGDGR…LILTVKDVGR (83 aa). Disordered regions lie at residues 502-536, 561-603, 630-730, and 752-828; these read MKAR…TSTT, CETT…QGHD, FSAP…AMGA, and RALP…PTST. The span at 520 to 536 shows a compositional bias: low complexity; sequence SYSDTGSSTGSHGTSTT. Positions 561 to 570 are enriched in polar residues; the sequence is CETTQGSTNA. 2 stretches are compositionally biased toward pro residues: residues 589 to 598 and 636 to 651; these read IKPPPPPPPL and RSPP…PTPG. Positions 655 to 674 are enriched in polar residues; that stretch reads ARDSPSSPIYASISHANPSS. Position 698 is a phosphoserine (serine 698). Composition is skewed to polar residues over residues 756-775 and 785-800; these read QTRT…TLSE and EAST…NTKN. The segment covering 802 to 813 has biased composition (basic and acidic residues); that stretch reads NGKELPQTERTT. The region spanning 829-912 is the PDZ 3 domain; that stretch reads LIRVRKSAAT…TKERDYIDFL (84 aa).

Forms homooligomers. Interacts (via C-terminal PDZ domain) with MYO15A; this interaction is necessary for localization of WHRN to stereocilia tips. Interacts (via C-terminal PDZ domain) with MPP1/p55. Interacts with LRRC4C/NGL1. Interacts with MYO7A. Interacts with RPGR. Interacts with EPS8. Interacts with CASK. Interacts with CIB2. Component of USH2 complex, composed of ADGRV1, PDZD7, USH2A and WHRN. Interacts (via PDZ domains) with PDZD7; the interaction is direct. Interacts (via N-terminal PDZ domain) with USH2A (via cytoplasmic region). Interacts with ADGRV1/MASS1 (via cytoplasmic region). In terms of tissue distribution, ubiquitous. Highly expressed in heart, spleen, lung and liver. Highly expressed in brain, in the olfactory bulb, thalamus, layers III-V of the cerebral cortex and the molecular layer of cerebellum. Detected in soma and dendrites of thalamic neurons, and in cerebrum in cell bodies and apical dendrites of pyramidal neurons. Expressed in retina and inner ear.

It localises to the cytoplasm. The protein localises to the cell projection. It is found in the stereocilium. Its subcellular location is the growth cone. The protein resides in the synapse. Functionally, involved in hearing and vision as member of the USH2 complex. Necessary for elongation and maintenance of inner and outer hair cell stereocilia in the organ of Corti in the inner ear. Involved in the maintenance of the hair bundle ankle region, which connects stereocilia in cochlear hair cells of the inner ear. In retina photoreceptors, required for the maintenance of periciliary membrane complex that seems to play a role in regulating intracellular protein transport. The polypeptide is Whirlin (Rattus norvegicus (Rat)).